The sequence spans 376 residues: Zinc transporter 7 (376 aa).

Over 1–37 (MLPLSIKDDEYKPPKFNLFRKISGWFRSILSDKTSRN) the chain is Cytoplasmic. Residues 38-58 (LFFFLCLNLSFAFVELLYGIW) traverse the membrane as a helical segment. The Lumenal segment spans residues 59 to 67 (SNCLGLISD). A helical transmembrane segment spans residues 68–88 (SFHMFFDSTAILAGLAASVIS). At 89-102 (KWRDNDAFSYGYVR) the chain is on the cytoplasmic side. A helical transmembrane segment spans residues 103–123 (AEVLAGFVNGLFLIFTAFFIF). Residues 124-140 (SEGVERALAPPDVHHER) are Lumenal-facing. The chain crosses the membrane as a helical span at residues 141-161 (LLLVSILGFVVNLVGIFVFKH). Positions 161–218 (HGGHGHSHGSGHGHSHSLFNGALDQTHGHGDHCHSHELKHGAAHSHDHAHGHGHFHSH) are his-rich loop. Topologically, residues 162 to 236 (GGHGHSHGSG…TGPSRQILQG (75 aa)) are cytoplasmic. The span at 188–222 (GHGDHCHSHELKHGAAHSHDHAHGHGHFHSHDGPS) shows a compositional bias: basic and acidic residues. The segment at 188 to 226 (GHGDHCHSHELKHGAAHSHDHAHGHGHFHSHDGPSLKET) is disordered. A helical membrane pass occupies residues 237-257 (VFLHILADTLGSIGVIASAIM). Residues 258 to 262 (MQNFG) lie on the Lumenal side of the membrane. The chain crosses the membrane as a helical span at residues 263-283 (LMIADPICSILIAMLIVISVI). Residues 284–376 (PLLRESVGIL…LYVQIDFAAM (93 aa)) are Cytoplasmic-facing.

It belongs to the cation diffusion facilitator (CDF) transporter (TC 2.A.4) family. SLC30A subfamily. In terms of assembly, homooligomer.

It is found in the golgi apparatus membrane. Its subcellular location is the cytoplasmic vesicle. The protein localises to the golgi apparatus. It localises to the trans-Golgi network. The protein resides in the sarcoplasmic reticulum. It is found in the mitochondrion. It catalyses the reaction Zn(2+)(in) = Zn(2+)(out). Zinc ion transporter mediating zinc entry from the cytosol into the lumen of organelles along the secretory pathway. By contributing to zinc ion homeostasis within the early secretory pathway, regulates the activation and folding of enzymes like alkaline phosphatases. In Bos taurus (Bovine), this protein is Zinc transporter 7 (SLC30A7).